The primary structure comprises 362 residues: MTYVLDLKRSFLDACTWLIGDNFRDLGSVLWVPLPILSLVIVATLGVLVIVWLERKISAGVQQRVGPEYGGALGLLQPLADGLKLVFKEDVVPAKSDTWLFTLGPAVVVIPIFLAYLVVPFGQQLIIADLRIGIFFWIAISSIAPIGLLMSGYGSNNKYSFLGGLRAAAQSISYELPLAICVLSVCLLADSLSTVDIVESQSSWGILTWNIWRQPIGFVAFLIAALAECERLPFDLPEAEEELVAGYQTEYTGMKFGLFYVGSYVNLLVSGCFVTVLYLGGWHGPFAIDGILPDSPPFQVLDAFLGITWTLLKTFLFLFAAILTRWTLPRVRIDQLLDLGWKFLLPVSLGNLLLTASLKLLF.

Transmembrane regions (helical) follow at residues 31–51 (WVPL…LVIV), 99–119 (WLFT…YLVV), 132–152 (IGIF…LMSG), 178–198 (LAIC…VDIV), 206–226 (ILTW…IAAL), 268–288 (LVSG…PFAI), 303–323 (AFLG…AAIL), and 336–356 (LLDL…LLTA).

It belongs to the complex I subunit 1 family. As to quaternary structure, NDH is composed of at least 16 different subunits, 5 of which are encoded in the nucleus.

It localises to the plastid. Its subcellular location is the chloroplast thylakoid membrane. It catalyses the reaction a plastoquinone + NADH + (n+1) H(+)(in) = a plastoquinol + NAD(+) + n H(+)(out). The catalysed reaction is a plastoquinone + NADPH + (n+1) H(+)(in) = a plastoquinol + NADP(+) + n H(+)(out). NDH shuttles electrons from NAD(P)H:plastoquinone, via FMN and iron-sulfur (Fe-S) centers, to quinones in the photosynthetic chain and possibly in a chloroplast respiratory chain. The immediate electron acceptor for the enzyme in this species is believed to be plastoquinone. Couples the redox reaction to proton translocation, and thus conserves the redox energy in a proton gradient. The chain is NAD(P)H-quinone oxidoreductase subunit 1, chloroplastic from Nephroselmis olivacea (Green alga).